A 683-amino-acid chain; its full sequence is PTS system mannose-specific EIIBCA component (683 aa).

The 89-residue stretch at methionine 1 to alanine 89 folds into the PTS EIIB type-1 domain. Residue cysteine 28 is the Phosphocysteine intermediate; for EIIB activity of the active site. The region spanning glutamate 117–lysine 476 is the PTS EIIC type-1 domain. Helical transmembrane passes span isoleucine 126–phenylalanine 146, tyrosine 162–alanine 182, tryptophan 193–alanine 213, valine 225–tryptophan 245, methionine 260–glycine 280, phenylalanine 303–tryptophan 323, proline 344–isoleucine 364, leucine 376–leucine 396, glycine 409–phenylalanine 429, and leucine 442–leucine 462. The region spanning aspartate 550–asparagine 654 is the PTS EIIA type-1 domain. Histidine 602 serves as the catalytic Tele-phosphohistidine intermediate; for EIIA activity.

It is found in the cell membrane. The catalysed reaction is D-mannose(out) + N(pros)-phospho-L-histidyl-[protein] = D-mannose 6-phosphate(in) + L-histidyl-[protein]. Its function is as follows. The phosphoenolpyruvate-dependent sugar phosphotransferase system (sugar PTS), a major carbohydrate active -transport system, catalyzes the phosphorylation of incoming sugar substrates concomitantly with their translocation across the cell membrane. This system is involved in mannose transport. This chain is PTS system mannose-specific EIIBCA component (ptsM), found in Corynebacterium glutamicum (strain ATCC 13032 / DSM 20300 / JCM 1318 / BCRC 11384 / CCUG 27702 / LMG 3730 / NBRC 12168 / NCIMB 10025 / NRRL B-2784 / 534).